Reading from the N-terminus, the 200-residue chain is Large ribosomal subunit protein bL25 (200 aa).

Positions 1–20 (MEARELKANVRKESGKEQAR) are disordered.

This sequence belongs to the bacterial ribosomal protein bL25 family. CTC subfamily. In terms of assembly, part of the 50S ribosomal subunit; part of the 5S rRNA/L5/L18/L25 subcomplex. Contacts the 5S rRNA. Binds to the 5S rRNA independently of L5 and L18.

Its function is as follows. This is one of the proteins that binds to the 5S RNA in the ribosome where it forms part of the central protuberance. In Syntrophus aciditrophicus (strain SB), this protein is Large ribosomal subunit protein bL25.